The chain runs to 71 residues: Conotoxin Ca5.1 (71 aa).

Positions 1–19 (MRCVPVFIILLLLASPAAS) are cleaved as a signal peptide. A propeptide spanning residues 20 to 56 (DPLEKRIQSDLIRAALEDADTKNDPRILEDIVSTALA) is cleaved from the precursor.

The protein belongs to the conotoxin T superfamily. Post-translationally, contains 2 disulfide bonds that can be either 'C1-C3, C2-C4' or 'C1-C4, C2-C3', since these disulfide connectivities have been observed for conotoxins with cysteine framework V (for examples, see AC P0DQQ7 and AC P81755). In terms of tissue distribution, expressed by the venom duct.

It is found in the secreted. The protein is Conotoxin Ca5.1 of Conus caracteristicus (Characteristic cone).